Here is a 633-residue protein sequence, read N- to C-terminus: Chaperone protein dnaK2 (633 aa).

Residue T196 is modified to Phosphothreonine; by autocatalysis. The interval A600 to G633 is disordered. The span at D624–G633 shows a compositional bias: acidic residues.

The protein belongs to the heat shock protein 70 family.

Functionally, acts as a chaperone. The chain is Chaperone protein dnaK2 (dnaK2) from Streptomyces avermitilis (strain ATCC 31267 / DSM 46492 / JCM 5070 / NBRC 14893 / NCIMB 12804 / NRRL 8165 / MA-4680).